A 372-amino-acid polypeptide reads, in one-letter code: Chorismate synthase (372 aa).

An NADP(+)-binding site is contributed by arginine 48. Residues 125–127 (RSS), glycine 285, 300–304 (KPTPS), and arginine 327 each bind FMN.

Belongs to the chorismate synthase family. FMNH2 serves as cofactor.

The catalysed reaction is 5-O-(1-carboxyvinyl)-3-phosphoshikimate = chorismate + phosphate. The protein operates within metabolic intermediate biosynthesis; chorismate biosynthesis; chorismate from D-erythrose 4-phosphate and phosphoenolpyruvate: step 7/7. Catalyzes the anti-1,4-elimination of the C-3 phosphate and the C-6 proR hydrogen from 5-enolpyruvylshikimate-3-phosphate (EPSP) to yield chorismate, which is the branch point compound that serves as the starting substrate for the three terminal pathways of aromatic amino acid biosynthesis. This reaction introduces a second double bond into the aromatic ring system. The polypeptide is Chorismate synthase (Methanocella arvoryzae (strain DSM 22066 / NBRC 105507 / MRE50)).